The primary structure comprises 342 residues: MARVISMSDAINEAMKLAMRKDENVLLIGEDVAGGAAVDHLQDDEAWGGVLGVTKGLVQEFGRTRVLDTPISEAGYMGAAMAAASTGLRPIAELMFNDFIGTCFDQVINQGAKFRYMFGGKAQVPITVRTTYGAGFRAAAQHSQSLYGLFTSIPGLKTVVPSNPYDAKGLLLAAIEDNDPVFFFEDKTSYNMKGEVPEDYYTIPLGKADIKREGNDVTLFAVGKQVNTALEAAAQLSERGIEAEVLDPRSLSPLDEDAIFTSLEKTNRLIIIDEANPRCSIATDIAALVADKGFDLLDAPIKRITAPHTPVPFSPVLEDQYLPTPDKIVSVTLELLGEPALN.

In terms of assembly, tetramer of 2 alpha and 2 beta subunits.

It participates in ketone degradation; acetoin degradation. Its function is as follows. Catalyzes the 2,6-dichlorophenolindophenol-dependent cleavage of acetoin into acetate and acetaldehyde. The polypeptide is Acetoin:2,6-dichlorophenolindophenol oxidoreductase subunit beta (acoB) (Bacillus subtilis (strain 168)).